Consider the following 93-residue polypeptide: Large ribosomal subunit protein uL23 (93 aa).

The protein belongs to the universal ribosomal protein uL23 family. As to quaternary structure, part of the 50S ribosomal subunit. Contacts protein L29, and trigger factor when it is bound to the ribosome.

Functionally, one of the early assembly proteins it binds 23S rRNA. One of the proteins that surrounds the polypeptide exit tunnel on the outside of the ribosome. Forms the main docking site for trigger factor binding to the ribosome. This chain is Large ribosomal subunit protein uL23, found in Campylobacter curvus (strain 525.92).